Reading from the N-terminus, the 52-residue chain is Venom peptide 4b (52 aa).

The N-terminal stretch at 1 to 23 (MRSAILLVIVAIVAILGFLGVNA) is a signal peptide. 3 AXPX repeats span residues 23–26 (AEPL), 31–34 (AEPN), and 39–42 (AAPL). A propeptide spanning residues 24–41 (EPLPSPLAEPNPHAKAAP) is cleaved from the precursor. Residues 30 to 52 (LAEPNPHAKAAPLSPAAMASLAG) are disordered. Positions 37-52 (AKAAPLSPAAMASLAG) are enriched in low complexity. An Alanine amide modification is found at Ala51.

In terms of tissue distribution, expressed by the venom gland.

It localises to the secreted. In Eumenes pomiformis (Potter wasp), this protein is Venom peptide 4b.